We begin with the raw amino-acid sequence, 832 residues long: DNA polymerase I, thermostable (832 aa).

One can recognise a 5'-3' exonuclease domain in the interval 175–260 (RPDQWADYRA…DLPLEVDFAK (86 aa)). The segment at 410 to 832 (ERLFANLWGR…IGEDWLSAKE (423 aa)) is polymerase.

This sequence belongs to the DNA polymerase type-A family.

It catalyses the reaction DNA(n) + a 2'-deoxyribonucleoside 5'-triphosphate = DNA(n+1) + diphosphate. In addition to polymerase activity, this DNA polymerase exhibits 5'-3' exonuclease activity. Unlikely to have 3'-5' exonuclease activity due to absence of a 3'-5' exonuclease domain. This is DNA polymerase I, thermostable (polA) from Thermus aquaticus.